A 559-amino-acid chain; its full sequence is 2-isopropylmalate synthase (559 aa).

The 275-residue stretch at Pro30–Lys304 folds into the Pyruvate carboxyltransferase domain. Mg(2+)-binding residues include Asp39, His243, His245, and Asn279. A regulatory domain region spans residues Val436–Ser559.

It belongs to the alpha-IPM synthase/homocitrate synthase family. LeuA type 2 subfamily. In terms of assembly, homodimer. It depends on Mg(2+) as a cofactor.

It is found in the cytoplasm. It catalyses the reaction 3-methyl-2-oxobutanoate + acetyl-CoA + H2O = (2S)-2-isopropylmalate + CoA + H(+). Its pathway is amino-acid biosynthesis; L-leucine biosynthesis; L-leucine from 3-methyl-2-oxobutanoate: step 1/4. Its function is as follows. Catalyzes the condensation of the acetyl group of acetyl-CoA with 3-methyl-2-oxobutanoate (2-ketoisovalerate) to form 3-carboxy-3-hydroxy-4-methylpentanoate (2-isopropylmalate). The polypeptide is 2-isopropylmalate synthase (Alcanivorax borkumensis (strain ATCC 700651 / DSM 11573 / NCIMB 13689 / SK2)).